The primary structure comprises 289 residues: Epoxyqueuosine reductase (289 aa).

The Proton donor role is filled by Asp111. In terms of domain architecture, 4Fe-4S ferredoxin-type spans Gln156 to Val185. Residues Cys165, Cys168, Cys171, Cys175, Cys191, Cys219, Cys222, and Cys226 each contribute to the [4Fe-4S] cluster site.

The protein belongs to the QueG family. Monomer. Cob(II)alamin serves as cofactor. [4Fe-4S] cluster is required as a cofactor.

The protein localises to the cytoplasm. It carries out the reaction epoxyqueuosine(34) in tRNA + AH2 = queuosine(34) in tRNA + A + H2O. The protein operates within tRNA modification; tRNA-queuosine biosynthesis. In terms of biological role, catalyzes the conversion of epoxyqueuosine (oQ) to queuosine (Q), which is a hypermodified base found in the wobble positions of tRNA(Asp), tRNA(Asn), tRNA(His) and tRNA(Tyr). The sequence is that of Epoxyqueuosine reductase from Synechocystis sp. (strain ATCC 27184 / PCC 6803 / Kazusa).